The primary structure comprises 545 residues: Inosine-5'-monophosphate dehydrogenase (545 aa).

CBS domains follow at residues 138–194 (MITD…DYDT) and 201–258 (MTKE…PDAT). NAD(+)-binding positions include Asp-295 and 347–349 (GIG). Residues Gly-349 and Gly-351 each coordinate K(+). IMP is bound at residue Ser-352. Cys-354 serves as a coordination point for K(+). The active-site Thioimidate intermediate is Cys-354. IMP-binding positions include 387–389 (DGG), 410–411 (GG), and 434–438 (YRGMG). Arg-455 serves as the catalytic Proton acceptor. Residue Glu-470 coordinates IMP. Positions 524, 525, and 526 each coordinate K(+).

It belongs to the IMPDH/GMPR family. As to quaternary structure, homotetramer. K(+) serves as cofactor.

It catalyses the reaction IMP + NAD(+) + H2O = XMP + NADH + H(+). Its pathway is purine metabolism; XMP biosynthesis via de novo pathway; XMP from IMP: step 1/1. Mycophenolic acid (MPA) is a non-competitive inhibitor that prevents formation of the closed enzyme conformation by binding to the same site as the amobile flap. In contrast, mizoribine monophosphate (MZP) is a competitive inhibitor that induces the closed conformation. MPA is a potent inhibitor of mammalian IMPDHs but a poor inhibitor of the bacterial enzymes. MZP is a more potent inhibitor of bacterial IMPDH. Catalyzes the conversion of inosine 5'-phosphate (IMP) to xanthosine 5'-phosphate (XMP), the first committed and rate-limiting step in the de novo synthesis of guanine nucleotides, and therefore plays an important role in the regulation of cell growth. This is Inosine-5'-monophosphate dehydrogenase from Bifidobacterium longum (strain NCC 2705).